Consider the following 367-residue polypeptide: Peptide chain release factor 2 (367 aa).

N5-methylglutamine is present on Q254.

This sequence belongs to the prokaryotic/mitochondrial release factor family. Post-translationally, methylated by PrmC. Methylation increases the termination efficiency of RF2.

It localises to the cytoplasm. Its function is as follows. Peptide chain release factor 2 directs the termination of translation in response to the peptide chain termination codons UGA and UAA. The chain is Peptide chain release factor 2 from Burkholderia mallei (strain ATCC 23344).